The chain runs to 292 residues: 4-hydroxybenzoate octaprenyltransferase (292 aa).

The next 8 membrane-spanning stretches (helical) occupy residues 23 to 43 (PIGI…AGEG), 47 to 67 (PGVA…GCVI), 98 to 118 (LILF…MNWL), 141 to 161 (HLPQ…TFAA), 164 to 184 (GSIP…ALIY), 211 to 231 (YDRE…AGIG), 233 to 253 (YLGL…FSVY), and 270 to 290 (FLNN…DYLW).

It belongs to the UbiA prenyltransferase family. The cofactor is Mg(2+).

It is found in the cell inner membrane. The enzyme catalyses all-trans-octaprenyl diphosphate + 4-hydroxybenzoate = 4-hydroxy-3-(all-trans-octaprenyl)benzoate + diphosphate. It participates in cofactor biosynthesis; ubiquinone biosynthesis. Catalyzes the prenylation of para-hydroxybenzoate (PHB) with an all-trans polyprenyl group. Mediates the second step in the final reaction sequence of ubiquinone-8 (UQ-8) biosynthesis, which is the condensation of the polyisoprenoid side chain with PHB, generating the first membrane-bound Q intermediate 3-octaprenyl-4-hydroxybenzoate. The sequence is that of 4-hydroxybenzoate octaprenyltransferase from Methylococcus capsulatus (strain ATCC 33009 / NCIMB 11132 / Bath).